Reading from the N-terminus, the 340-residue chain is GTP 3',8-cyclase (340 aa).

Residues Lys8–Asp227 form the Radical SAM core domain. Position 17 (Arg17) interacts with GTP. [4Fe-4S] cluster-binding residues include Cys24 and Cys28. Tyr30 contributes to the S-adenosyl-L-methionine binding site. A [4Fe-4S] cluster-binding site is contributed by Cys31. Arg71 lines the GTP pocket. Gly75 provides a ligand contact to S-adenosyl-L-methionine. Thr102 is a binding site for GTP. S-adenosyl-L-methionine is bound at residue Ser126. Residue Lys163 coordinates GTP. Met197 lines the S-adenosyl-L-methionine pocket. [4Fe-4S] cluster contacts are provided by Cys261 and Cys264. Position 266–268 (Arg266–Arg268) interacts with GTP. Cys278 is a binding site for [4Fe-4S] cluster.

The protein belongs to the radical SAM superfamily. MoaA family. As to quaternary structure, monomer and homodimer. [4Fe-4S] cluster is required as a cofactor.

The catalysed reaction is GTP + AH2 + S-adenosyl-L-methionine = (8S)-3',8-cyclo-7,8-dihydroguanosine 5'-triphosphate + 5'-deoxyadenosine + L-methionine + A + H(+). The protein operates within cofactor biosynthesis; molybdopterin biosynthesis. Catalyzes the cyclization of GTP to (8S)-3',8-cyclo-7,8-dihydroguanosine 5'-triphosphate. The sequence is that of GTP 3',8-cyclase from Staphylococcus aureus (strain Mu3 / ATCC 700698).